A 148-amino-acid polypeptide reads, in one-letter code: Protein H2A.6 (148 aa).

The disordered stretch occupies residues Gly120–Glu148. 2 consecutive short sequence motifs (SPKK motif) follow at residues Ser129 to Lys132 and Ser138 to Lys141. Over residues Ser129–Glu148 the composition is skewed to basic residues.

This sequence belongs to the histone H2A family. In terms of assembly, the nucleosome is a histone octamer containing two molecules each of H2A, H2B, H3 and H4 assembled in one H3-H4 heterotetramer and two H2A-H2B heterodimers. The octamer wraps approximately 147 bp of DNA. Abundant in meristematic tissues.

It localises to the nucleus. The protein resides in the chromosome. Core component of nucleosome. Nucleosomes wrap and compact DNA into chromatin, limiting DNA accessibility to the cellular machineries which require DNA as a template. Histones thereby play a central role in transcription regulation, DNA repair, DNA replication and chromosomal stability. DNA accessibility is regulated via a complex set of post-translational modifications of histones, also called histone code, and nucleosome remodeling. The sequence is that of Protein H2A.6 (H2A-3) from Triticum aestivum (Wheat).